We begin with the raw amino-acid sequence, 494 residues long: MRPPGFRNFLLLASSLLFAGLSAVPQSFSPSLRSWPGAACRLSRAESERRCRAPGQPPGAALCHGRGRCDCGVCICHVTEPGMFFGPLCECHEWVCETYDGSTCAGHGKCDCGKCKCDQGWYGDACQYPTNCDLTKKKSNQMCKNSQDIICSNAGTCHCGRCKCDNSDGSGLVYGKFCECDDRECIDDETEEICGGHGKCYCGNCYCKAGWHGDKCEFQCDITPWESKRRCTSPDGKICSNRGTCVCGECTCHDVDPTGDWGDIHGDTCECDERDCRAVYDRYSDDFCSGHGQCNCGRCDCKAGWYGKKCEHPQSCTLSAEESIRKCQGSSDLPCSGRGKCECGKCTCYPPGDRRVYGKTCECDDRRCEDLDGVVCGGHGTCSCGRCVCERGWFGKLCQHPRKCNMTEEQSKNLCESADGILCSGKGSCHCGKCICSAEEWYISGEFCDCDDRDCDKHDGLICTGNGICSCGNCECWDGWNGNACEIWLGSEYP.

An N-terminal signal peptide occupies residues 1 to 23 (MRPPGFRNFLLLASSLLFAGLSA). 40 disulfides stabilise this stretch: cysteine 40–cysteine 71, cysteine 51–cysteine 69, cysteine 63–cysteine 74, cysteine 76–cysteine 89, cysteine 91–cysteine 112, cysteine 96–cysteine 110, cysteine 104–cysteine 115, cysteine 117–cysteine 126, cysteine 132–cysteine 159, cysteine 143–cysteine 157, cysteine 151–cysteine 162, cysteine 164–cysteine 178, cysteine 180–cysteine 202, cysteine 185–cysteine 200, cysteine 194–cysteine 205, cysteine 207–cysteine 216, cysteine 220–cysteine 247, cysteine 231–cysteine 245, cysteine 239–cysteine 250, cysteine 252–cysteine 269, cysteine 271–cysteine 296, cysteine 276–cysteine 294, cysteine 288–cysteine 299, cysteine 301–cysteine 310, cysteine 316–cysteine 343, cysteine 327–cysteine 341, cysteine 335–cysteine 346, cysteine 348–cysteine 361, cysteine 363–cysteine 384, cysteine 368–cysteine 382, cysteine 376–cysteine 387, cysteine 389–cysteine 398, cysteine 404–cysteine 431, cysteine 415–cysteine 429, cysteine 423–cysteine 434, cysteine 436–cysteine 448, cysteine 450–cysteine 471, cysteine 455–cysteine 469, cysteine 463–cysteine 474, and cysteine 476–cysteine 485. I-EGF domains follow at residues 40-90 (CRLS…PLCE), 91-127 (CHEWVCETYDGSTCAGHGKCDCGKCKCDQGWYGDACQ), 132-179 (CDLT…KFCE), 180-217 (CDDRECIDDETEEICGGHGKCYCGNCYCKAGWHGDKCE), 220-270 (CDIT…DTCE), 271-311 (CDER…KKCE), 316-362 (CTLS…KTCE), 363-399 (CDDRRCEDLDGVVCGGHGTCSCGRCVCERGWFGKLCQ), 404-449 (CNMT…EFCD), and 450-486 (CDDRDCDKHDGLICTGNGICSCGNCECWDGWNGNACE). The I repeat unit spans residues 51–95 (CRAPGQPPGAALCHGRGRCDCGVCICHVTEPGMFFGPLCECHEWV). The cysteine-rich tandem repeats stretch occupies residues 51–494 (CRAPGQPPGA…CEIWLGSEYP (444 aa)). The II repeat unit spans residues 96–142 (CETYDGSTCAGHGKCDCGKCKCDQGWYGDACQYPTNCDLTKKKSNQM). Residues 143–184 (CKNSQDIICSNAGTCHCGRCKCDNSDGSGLVYGKFCECDDRE) form an III repeat. The stretch at 185–230 (CIDDETEEICGGHGKCYCGNCYCKAGWHGDKCEFQCDITPWESKRR) is one IV repeat. The V repeat unit spans residues 231–275 (CTSPDGKICSNRGTCVCGECTCHDVDPTGDWGDIHGDTCECDERD). A VI repeat occupies 276–326 (CRAVYDRYSDDFCSGHGQCNCGRCDCKAGWYGKKCEHPQSCTLSAEESIRK). Residues 327–367 (CQGSSDLPCSGRGKCECGKCTCYPPGDRRVYGKTCECDDRR) form a VII repeat. The VIII repeat unit spans residues 368–414 (CEDLDGVVCGGHGTCSCGRCVCERGWFGKLCQHPRKCNMTEEQSKNL). Asparagine 405 carries N-linked (GlcNAc...) asparagine glycosylation. An IX repeat occupies 415 to 454 (CESADGILCSGKGSCHCGKCICSAEEWYISGEFCDCDDRD). One copy of the X repeat lies at 455 to 494 (CDKHDGLICTGNGICSCGNCECWDGWNGNACEIWLGSEYP).

As to expression, widely expressed in many tissues, but readily detectable only in aorta.

It localises to the secreted. This Homo sapiens (Human) protein is Integrin beta-like protein 1 (ITGBL1).